A 93-amino-acid polypeptide reads, in one-letter code: Large ribosomal subunit protein uL23cz/uL23cy (93 aa).

This sequence belongs to the universal ribosomal protein uL23 family. Part of the 50S ribosomal subunit.

It localises to the plastid. The protein resides in the chloroplast. Functionally, binds to 23S rRNA. This chain is Large ribosomal subunit protein uL23cz/uL23cy (rpl23-A), found in Citrus sinensis (Sweet orange).